Reading from the N-terminus, the 656-residue chain is NADH-ubiquinone oxidoreductase chain 5 (656 aa).

The next 17 helical transmembrane spans lie at isoleucine 5–leucine 23, isoleucine 30–phenylalanine 52, leucine 81–tyrosine 103, arginine 112–threonine 129, tyrosine 133–phenylalanine 155, phenylalanine 168–glycine 190, leucine 200–alanine 222, valine 243–arginine 262, threonine 272–phenylalanine 294, valine 301–serine 320, isoleucine 324–isoleucine 346, proline 367–phenylalanine 389, serine 409–leucine 431, isoleucine 452–leucine 471, phenylalanine 514–phenylalanine 536, leucine 607–isoleucine 629, and glutamine 634–phenylalanine 653.

Belongs to the complex I subunit 5 family.

The protein localises to the mitochondrion inner membrane. The enzyme catalyses a ubiquinone + NADH + 5 H(+)(in) = a ubiquinol + NAD(+) + 4 H(+)(out). Functionally, core subunit of the mitochondrial membrane respiratory chain NADH dehydrogenase (Complex I) that is believed to belong to the minimal assembly required for catalysis. Complex I functions in the transfer of electrons from NADH to the respiratory chain. The immediate electron acceptor for the enzyme is believed to be ubiquinone. The protein is NADH-ubiquinone oxidoreductase chain 5 (ND5) of Cryphonectria parasitica (Chestnut blight fungus).